Reading from the N-terminus, the 23-residue chain is Alyteserin-1b (23 aa).

Asn23 is modified (asparagine amide).

As to expression, expressed by the skin glands.

The protein localises to the secreted. The protein resides in the target cell membrane. In terms of biological role, antibacterial peptide with amphipathic alpha-helical structure. Shows selective growth inhibitory activity against the Gram-negative bacteria E.coli (MIC=25 uM). Has a weak hemolytic activity against human erythrocytes (LC(50)=200 uM). Is not active against S.aureus (MIC=200 uM). The chain is Alyteserin-1b from Alytes obstetricans (Common midwife toad).